The primary structure comprises 172 residues: MNLKEKIRVIEGFPKEGISFKDITTVLNDKEALKYTVDAIVEHLKDKNVDVVVGPEARGFLFGTPVAYALGAAFVPVRKKGKLPCETISSEYDLEYGSDVLQIHKDAIKKGQKVAIVDDLLATGGTMNSVIEMIEKLGGEVVSVDFLIELTDLKGREKIGNYDIMSLVQYDI.

Belongs to the purine/pyrimidine phosphoribosyltransferase family. In terms of assembly, homodimer.

It localises to the cytoplasm. The enzyme catalyses AMP + diphosphate = 5-phospho-alpha-D-ribose 1-diphosphate + adenine. The protein operates within purine metabolism; AMP biosynthesis via salvage pathway; AMP from adenine: step 1/1. In terms of biological role, catalyzes a salvage reaction resulting in the formation of AMP, that is energically less costly than de novo synthesis. In Clostridium novyi (strain NT), this protein is Adenine phosphoribosyltransferase.